A 520-amino-acid polypeptide reads, in one-letter code: GMP synthase [glutamine-hydrolyzing] (520 aa).

The 194-residue stretch at 9–202 folds into the Glutamine amidotransferase type-1 domain; it reads SVLIIDFGSQ…VHNIAGITGD (194 aa). Cys-86 (nucleophile) is an active-site residue. Catalysis depends on residues His-176 and Glu-178. A GMPS ATP-PPase domain is found at 203–395; it reads WSMSAYRAKA…LGLPDSFIGR (193 aa). 230–236 contributes to the ATP binding site; it reads SGGVDSS.

In terms of assembly, homodimer.

It carries out the reaction XMP + L-glutamine + ATP + H2O = GMP + L-glutamate + AMP + diphosphate + 2 H(+). Its pathway is purine metabolism; GMP biosynthesis; GMP from XMP (L-Gln route): step 1/1. Its function is as follows. Catalyzes the synthesis of GMP from XMP. The polypeptide is GMP synthase [glutamine-hydrolyzing] (Allorhizobium ampelinum (strain ATCC BAA-846 / DSM 112012 / S4) (Agrobacterium vitis (strain S4))).